We begin with the raw amino-acid sequence, 83 residues long: MQLKIQLLMLVLMIVLTDVYSKDGFIVSKKNCLYRCSQSDERGFCNAVCLRYDADSGYCRTGKCWCDGLPQKANIAMKNKNYC.

A signal peptide spans 1-21 (MQLKIQLLMLVLMIVLTDVYS). An LCN-type CS-alpha/beta domain is found at 22–83 (KDGFIVSKKN…NIAMKNKNYC (62 aa)). Intrachain disulfides connect Cys32–Cys83, Cys36–Cys59, Cys45–Cys64, and Cys49–Cys66.

Belongs to the long (4 C-C) scorpion toxin superfamily. Sodium channel inhibitor family. Alpha subfamily. As to expression, expressed by the venom gland.

The protein resides in the secreted. Functionally, binds voltage-independently at site-3 of voltage-gated sodium channels (Nav) and inhibits the inactivation of the activated channels, thereby blocking neuronal transmission. The protein is Neurotoxin LmNaTx3 of Lychas mucronatus (Chinese swimming scorpion).